The following is a 301-amino-acid chain: Dimethylsulfoniopropionate lyase (301 aa).

Active-site proton donor/acceptor residues include Cys111 and Cys230.

This sequence belongs to the aspartate/glutamate racemases family. ALMA1 subfamily. Homotetramer.

The enzyme catalyses S,S-dimethyl-beta-propiothetin = acrylate + dimethyl sulfide + H(+). Mediates cleavage of dimethylsulfoniopropionate (DMSP) into dimethyl sulfide (DMS) and acrylate. DMS is the principal form by which sulfur is transported from oceans to the atmosphere and is a key component of the ocean sulfur cycle. The sequence is that of Dimethylsulfoniopropionate lyase from Durusdinium sp. clade D (Symbiodinium sp. clade D).